The chain runs to 289 residues: ATP synthase gamma chain (289 aa).

It belongs to the ATPase gamma chain family. As to quaternary structure, F-type ATPases have 2 components, CF(1) - the catalytic core - and CF(0) - the membrane proton channel. CF(1) has five subunits: alpha(3), beta(3), gamma(1), delta(1), epsilon(1). CF(0) has three main subunits: a, b and c.

The protein localises to the cell inner membrane. In terms of biological role, produces ATP from ADP in the presence of a proton gradient across the membrane. The gamma chain is believed to be important in regulating ATPase activity and the flow of protons through the CF(0) complex. This Halorhodospira halophila (strain DSM 244 / SL1) (Ectothiorhodospira halophila (strain DSM 244 / SL1)) protein is ATP synthase gamma chain.